A 425-amino-acid chain; its full sequence is 2-oxoglutarate and iron-dependent oxygenase JMJD4 homolog (425 aa).

Residues 165–316 (AAQMPGYNFY…MVWQNLKNNL (152 aa)) enclose the JmjC domain. H212, D214, and H284 together coordinate Fe cation.

This sequence belongs to the JMJD6 family. Requires Fe(2+) as cofactor.

It is found in the nucleus. Its subcellular location is the cytoplasm. It carries out the reaction L-lysyl-[protein] + 2-oxoglutarate + O2 = 4-hydroxy-L-lysyl-[protein] + succinate + CO2. Its function is as follows. Catalyzes the 2-oxoglutarate and iron-dependent C4-lysyl hydroxylation of eRF1 thereby promoting the translational termination efficiency of eRF1. May be involved in regulation of chromatin structure, promoting expansion of heterochromatin. The protein is 2-oxoglutarate and iron-dependent oxygenase JMJD4 homolog of Drosophila melanogaster (Fruit fly).